Here is a 276-residue protein sequence, read N- to C-terminus: Lectin-like protein At3g16530 (276 aa).

The first 19 residues, M1–A19, serve as a signal peptide directing secretion. Residues V20–E270 are legume-lectin like. N79, N129, and N196 each carry an N-linked (GlcNAc...) asparagine glycan.

It belongs to the leguminous lectin family.

Its subcellular location is the secreted. The protein localises to the extracellular space. The protein resides in the apoplast. This Arabidopsis thaliana (Mouse-ear cress) protein is Lectin-like protein At3g16530.